The sequence spans 389 residues: Putative cyclin-F3-1 (389 aa).

The disordered stretch occupies residues 1-103 (MEAAAAAAAE…GAAGGSRQPV (103 aa)). Residues 19-43 (VEGAAVAAVAPEAAAEGPSEPNAGE) show a composition bias toward low complexity.

It belongs to the cyclin family. Cyclin F subfamily.

This Oryza sativa subsp. japonica (Rice) protein is Putative cyclin-F3-1 (CYCF3-1).